A 97-amino-acid polypeptide reads, in one-letter code: Large ribosomal subunit protein eL21 (97 aa).

It belongs to the eukaryotic ribosomal protein eL21 family.

The chain is Large ribosomal subunit protein eL21 from Methanococcoides burtonii (strain DSM 6242 / NBRC 107633 / OCM 468 / ACE-M).